The following is an 878-amino-acid chain: Protein translocase subunit SecA (878 aa).

ATP is bound by residues Gln79, 97 to 101, and Asp487; that span reads GEGKT.

This sequence belongs to the SecA family.

It is found in the plastid. It localises to the chloroplast stroma. The protein resides in the chloroplast thylakoid membrane. It catalyses the reaction ATP + H2O + cellular proteinSide 1 = ADP + phosphate + cellular proteinSide 2.. Its function is as follows. Has a central role in coupling the hydrolysis of ATP to the transfer of proteins across the thylakoid membrane. In Antithamnion sp. (Red alga), this protein is Protein translocase subunit SecA.